The primary structure comprises 459 residues: Heat stress transcription factor A-4d (459 aa).

The stretch at 127 to 189 (AESERRELEE…QKNIVASLCE (63 aa)) forms a coiled coil. A hydrophobic repeat HR-A/B region spans residues 141-191 (LKYEKSILVADLQRQNQQQYVINWQMQAMEGRLVAMEQRQKNIVASLCEML). The short motif at 209 to 213 (SKKRR) is the Nuclear localization signal element. The segment covering 364 to 388 (YPTQADVNSEIASSTDTSQDGTSET) has biased composition (polar residues). The segment at 364 to 398 (YPTQADVNSEIASSTDTSQDGTSETEASHGPTNDV) is disordered. Positions 397–406 (DVFWERFLTE) match the AHA motif.

It belongs to the HSF family. Class A subfamily. As to quaternary structure, homotrimer. Post-translationally, exhibits temperature-dependent phosphorylation.

It localises to the nucleus. In terms of biological role, transcriptional regulator that specifically binds DNA of heat shock promoter elements (HSE). The sequence is that of Heat stress transcription factor A-4d (HSFA4D) from Oryza sativa subsp. japonica (Rice).